The chain runs to 98 residues: NADH-ubiquinone oxidoreductase chain 4L (98 aa).

3 consecutive transmembrane segments (helical) span residues 2-22 (SPAVLNITMAFTFSLLGTLMF), 26-46 (LMSTLLCLEGMMLSLFMLATI), and 59-79 (IPIAILVFAACEAAVGLALLA).

Belongs to the complex I subunit 4L family. Core subunit of respiratory chain NADH dehydrogenase (Complex I) which is composed of 45 different subunits.

The protein resides in the mitochondrion inner membrane. The catalysed reaction is a ubiquinone + NADH + 5 H(+)(in) = a ubiquinol + NAD(+) + 4 H(+)(out). Functionally, core subunit of the mitochondrial membrane respiratory chain NADH dehydrogenase (Complex I) which catalyzes electron transfer from NADH through the respiratory chain, using ubiquinone as an electron acceptor. Part of the enzyme membrane arm which is embedded in the lipid bilayer and involved in proton translocation. This chain is NADH-ubiquinone oxidoreductase chain 4L (MT-ND4L), found in Alexandromys kikuchii (Taiwan vole).